Here is a 464-residue protein sequence, read N- to C-terminus: Asparagine--tRNA ligase (464 aa).

It belongs to the class-II aminoacyl-tRNA synthetase family. As to quaternary structure, homodimer.

It localises to the cytoplasm. It catalyses the reaction tRNA(Asn) + L-asparagine + ATP = L-asparaginyl-tRNA(Asn) + AMP + diphosphate + H(+). The polypeptide is Asparagine--tRNA ligase (Clostridium botulinum (strain Alaska E43 / Type E3)).